The following is a 236-amino-acid chain: Probable ascorbate-specific transmembrane electron transporter 2 (236 aa).

Residues methionine 1–proline 11 are Cytoplasmic-facing. The chain crosses the membrane as a helical span at residues phenylalanine 12–isoleucine 32. One can recognise a Cytochrome b561 domain in the interval valine 15–valine 219. The Extracellular segment spans residues serine 33–proline 53. Histidine 52 contacts heme b. A helical transmembrane segment spans residues valine 54–phenylalanine 74. Alanine 67–proline 75 is a binding site for L-ascorbate. At proline 75–leucine 84 the chain is on the cytoplasmic side. A helical transmembrane segment spans residues isoleucine 85–phenylalanine 105. 2 residues coordinate heme b: histidine 86 and histidine 120. The Extracellular portion of the chain corresponds to lysine 106–tryptophan 122. Leucine 116–isoleucine 125 lines the monodehydro-L-ascorbate radical pocket. The chain crosses the membrane as a helical span at residues leucine 123–phenylalanine 143. Topologically, residues tyrosine 144–arginine 153 are cytoplasmic. The chain crosses the membrane as a helical span at residues glycine 154–alanine 174. Histidine 159 serves as a coordination point for heme b. Topologically, residues glutamate 175–glutamate 196 are extracellular. A helical transmembrane segment spans residues alanine 197 to alanine 217. Residues alanine 218–asparagine 236 are Cytoplasmic-facing.

It depends on heme b as a cofactor.

It is found in the membrane. Two-heme-containing cytochrome. Catalyzes ascorbate-dependent trans-membrane electron transfer by utilizing a concerted H(+)/e(-) transfer mechanism. The sequence is that of Probable ascorbate-specific transmembrane electron transporter 2 from Oryza sativa subsp. japonica (Rice).